A 476-amino-acid chain; its full sequence is Glutamate--tRNA ligase (476 aa).

The 'HIGH' region signature appears at 9–19 (PSPTGLFHIGT). The 'KMSKS' region signature appears at 248–252 (KLSKR). Position 251 (Lys251) interacts with ATP.

Belongs to the class-I aminoacyl-tRNA synthetase family. Glutamate--tRNA ligase type 1 subfamily. Monomer.

The protein localises to the cytoplasm. It carries out the reaction tRNA(Glu) + L-glutamate + ATP = L-glutamyl-tRNA(Glu) + AMP + diphosphate. Its function is as follows. Catalyzes the attachment of glutamate to tRNA(Glu) in a two-step reaction: glutamate is first activated by ATP to form Glu-AMP and then transferred to the acceptor end of tRNA(Glu). This is Glutamate--tRNA ligase from Prochlorococcus marinus (strain AS9601).